The chain runs to 90 residues: MKKTVHLRITGHVQGVGLRYSVYQKATSLGITGYAENLYDGSVEVVAEGDEESIKELIHFIKTGLRWARVDNVEERWLEYKGQYKDFRIY.

The Acylphosphatase-like domain maps to 4 to 90 (TVHLRITGHV…KGQYKDFRIY (87 aa)). Active-site residues include Arg-19 and Asn-37.

This sequence belongs to the acylphosphatase family.

The enzyme catalyses an acyl phosphate + H2O = a carboxylate + phosphate + H(+). The polypeptide is Acylphosphatase (acyP) (Caldanaerobacter subterraneus subsp. tengcongensis (strain DSM 15242 / JCM 11007 / NBRC 100824 / MB4) (Thermoanaerobacter tengcongensis)).